Consider the following 244-residue polypeptide: Mediator of RNA polymerase II transcription subunit 19 (244 aa).

2 disordered regions span residues 1 to 67 (MENF…PFYL) and 171 to 244 (PKKK…SSLR). Over residues 26–38 (GKPPPPPPPPPGG) the composition is skewed to pro residues. Low complexity predominate over residues 44 to 55 (PPSTATSAPAGA). Positions 171-182 (PKKKNKHKHKQS) are enriched in basic residues. S194 is subject to Phosphoserine. Basic residues predominate over residues 212-224 (KRKKKEKKKKKNR). S226 carries the phosphoserine modification. Over residues 234 to 244 (SSQASSSSSLR) the composition is skewed to low complexity.

This sequence belongs to the Mediator complex subunit 19 family. In terms of assembly, component of the Mediator complex, which is composed of MED1, MED4, MED6, MED7, MED8, MED9, MED10, MED11, MED12, MED13, MED13L, MED14, MED15, MED16, MED17, MED18, MED19, MED20, MED21, MED22, MED23, MED24, MED25, MED26, MED27, MED29, MED30, MED31, CCNC, CDK8 and CDC2L6/CDK11. The MED12, MED13, CCNC and CDK8 subunits form a distinct module termed the CDK8 module. Mediator containing the CDK8 module is less active than Mediator lacking this module in supporting transcriptional activation. Individual preparations of the Mediator complex lacking one or more distinct subunits have been variously termed ARC, CRSP, DRIP, PC2, SMCC and TRAP.

It is found in the nucleus. Functionally, component of the Mediator complex, a coactivator involved in the regulated transcription of nearly all RNA polymerase II-dependent genes. Mediator functions as a bridge to convey information from gene-specific regulatory proteins to the basal RNA polymerase II transcription machinery. Mediator is recruited to promoters by direct interactions with regulatory proteins and serves as a scaffold for the assembly of a functional preinitiation complex with RNA polymerase II and the general transcription factors. This Mus musculus (Mouse) protein is Mediator of RNA polymerase II transcription subunit 19 (Med19).